A 215-amino-acid chain; its full sequence is MKILITGFDPFGGEAINPALEAIKKLPATIHGAEIKCIEVPTVFQKSADVLQQHIESFQPDAVLCIGQAGGRTGLTPERVAINQDDARIPDNEGNQPIDTPIRADGKAAYFSTLPIKAMVAAIHQAGLPASVSNTAGTFVCNHLMYQALYLVDKYCPNAKAGFMHIPFMMEQVVDKPNTAAMNLDDITRGIEAAIFAIVDFKDRSDLKRVGGATH.

Residues Glu78, Cys141, and His165 contribute to the active site.

This sequence belongs to the peptidase C15 family. In terms of assembly, homotetramer.

The protein localises to the cytoplasm. It catalyses the reaction Release of an N-terminal pyroglutamyl group from a polypeptide, the second amino acid generally not being Pro.. In terms of biological role, removes 5-oxoproline from various penultimate amino acid residues except L-proline. This is Pyrrolidone-carboxylate peptidase from Streptococcus pyogenes serotype M18 (strain MGAS8232).